The following is a 464-amino-acid chain: RCC1-like G exchanging factor-like protein (464 aa).

The transit peptide at 1-37 directs the protein to the mitochondrion; sequence MALVALVAGARLGRRLSGPGLGRGHWTAAGRSRSRRE. RCC1 repeat units follow at residues 58–124, 128–191, 193–247, 248–300, 302–353, 354–411, and 412–461; these read ADRV…LSSK, VTKV…VLTD, EGVF…FLTD, KGEV…AVSA, GGLF…VLNG, EGHV…ALTN, and KGEL…TLAK.

In terms of assembly, forms a regulatory protein-RNA complex, consisting of RCC1L, NGRN, RPUSD3, RPUSD4, TRUB2, FASTKD2 and 16S mt-rRNA. Interacts with 16S mt-rRNA; this interaction is direct. Interacts with OPA1; this interaction is direct. As to quaternary structure, asociates with the mitochondrial ribosome large subunit (mt-LSU). Asociates with the mitochondrial ribosome small subunit (mt-SSU). Ubiquitous.

It localises to the mitochondrion membrane. It is found in the mitochondrion inner membrane. Its function is as follows. Guanine nucleotide exchange factor (GEF) for mitochondrial dynamin-related GTPase OPA1. Activates OPA1, by exchanging bound GDP for free GTP, and drives OPA1 and MFN1-dependent mitochondrial fusion. Plays an essential role in mitochondrial ribosome biogenesis. As a component of a functional protein-RNA module, consisting of RCC1L, NGRN, RPUSD3, RPUSD4, TRUB2, FASTKD2 and 16S mitochondrial ribosomal RNA (16S mt-rRNA), controls 16S mt-rRNA abundance and is required for intra-mitochondrial translation of core subunits of the oxidative phosphorylation system. Plays an essential role in mitochondrial ribosome biogenesis via its association with GTPases that play a role in the assembly of the large ribosome subunit. In terms of biological role, plays an essential role in mitochondrial ribosome biogenesis via its association with GTPases that play a role in the assembly of the small ribosome subunit. The sequence is that of RCC1-like G exchanging factor-like protein from Homo sapiens (Human).